Here is a 364-residue protein sequence, read N- to C-terminus: N-acetyl-gamma-glutamyl-phosphate reductase (364 aa).

Cys157 is an active-site residue.

This sequence belongs to the NAGSA dehydrogenase family. Type 1 subfamily.

The protein resides in the cytoplasm. The catalysed reaction is N-acetyl-L-glutamate 5-semialdehyde + phosphate + NADP(+) = N-acetyl-L-glutamyl 5-phosphate + NADPH + H(+). It participates in amino-acid biosynthesis; L-arginine biosynthesis; N(2)-acetyl-L-ornithine from L-glutamate: step 3/4. Its function is as follows. Catalyzes the NADPH-dependent reduction of N-acetyl-5-glutamyl phosphate to yield N-acetyl-L-glutamate 5-semialdehyde. This Bifidobacterium longum (strain DJO10A) protein is N-acetyl-gamma-glutamyl-phosphate reductase.